Here is a 437-residue protein sequence, read N- to C-terminus: Septin-7 (437 aa).

The residue at position 2 (serine 2) is an N-acetylserine. Residue tyrosine 30 is modified to Phosphotyrosine. Residues 47-316 (RGFEFTLMVV…ENYRSRKLAA (270 aa)) form the Septin-type G domain. The interval 47–317 (RGFEFTLMVV…NYRSRKLAAV (271 aa)) is interaction with SEPTIN12. The tract at residues 57–64 (GESGLGKS) is G1 motif. 57–64 (GESGLGKS) serves as a coordination point for GTP. Serine 77 carries the phosphoserine modification. GTP contacts are provided by residues threonine 90, glycine 116, and 195 to 203 (KADTLTPEE). The tract at residues 113 to 116 (DTPG) is G3 motif. Residues 194–197 (AKAD) form a G4 motif region. Phosphothreonine is present on threonine 228. 2 residues coordinate GTP: glycine 250 and arginine 265. Residues 332–433 (TKSPLAQMEE…SRTLEKNKKK (102 aa)) adopt a coiled-coil conformation. Serine 334 carries the post-translational modification Phosphoserine. Lysine 373 bears the N6-acetyllysine mark. The span at 378–410 (ELQRRHEQMKKNLEAQHKELEEKRRQFEDEKAN) shows a compositional bias: basic and acidic residues. The interval 378–437 (ELQRRHEQMKKNLEAQHKELEEKRRQFEDEKANWEAQQRILEQQNSSRTLEKNKKKGKIF) is disordered. Residue serine 424 is modified to Phosphoserine. The residue at position 426 (threonine 426) is a Phosphothreonine.

The protein belongs to the TRAFAC class TrmE-Era-EngA-EngB-Septin-like GTPase superfamily. Septin GTPase family. Septins polymerize into heterooligomeric protein complexes that form filaments, and associate with cellular membranes, actin filaments and microtubules. GTPase activity is required for filament formation. Filaments are assembled from asymmetrical heterotrimers, composed of SEPTIN2, SEPTIN6 and SEPTIN7 that associate head-to-head to form a hexameric unit. Within the trimer, directly interacts with SEPTIN6, while interaction with SEPTIN2 seems indirect. In the absence of SEPTIN6, forms homodimers. Interacts directly with CENPE and links CENPE to septin filaments composed of SEPTIN2, SEPTIN6 and SEPTIN7. Interacts with SEPTIN5, SEPTIN8, SEPTIN9 and SEPTIN11. Component of a septin core octameric complex consisting of SEPTIN12, SEPTIN7, SEPTIN6 and SEPTIN2 or SEPTIN4 in the order 12-7-6-2-2-6-7-12 or 12-7-6-4-4-6-7-12 and located in the sperm annulus; the SEPTIN12:SEPTIN7 association is mediated by the respective GTP-binding domains.

Its subcellular location is the cytoplasm. It is found in the chromosome. The protein resides in the centromere. It localises to the kinetochore. The protein localises to the cytoskeleton. Its subcellular location is the spindle. It is found in the cleavage furrow. The protein resides in the midbody. It localises to the cilium axoneme. The protein localises to the cell projection. Its subcellular location is the cilium. It is found in the flagellum. Filament-forming cytoskeletal GTPase. Required for normal organization of the actin cytoskeleton. Required for normal progress through mitosis. Involved in cytokinesis. Required for normal association of CENPE with the kinetochore. Plays a role in ciliogenesis and collective cell movements. Forms a filamentous structure with SEPTIN12, SEPTIN6, SEPTIN2 and probably SEPTIN4 at the sperm annulus which is required for the structural integrity and motility of the sperm tail during postmeiotic differentiation. This chain is Septin-7, found in Bos taurus (Bovine).